We begin with the raw amino-acid sequence, 149 residues long: Transcriptional repressor NrdR (149 aa).

Residues 3-34 fold into a zinc finger; sequence CPFCFAVDTKVIDSRLVGEGSSVRRRRQCLVC. Residues 49-139 form the ATP-cone domain; that stretch reads PRVVKSNDVR…VYRSFEDIKE (91 aa).

The protein belongs to the NrdR family. Zn(2+) is required as a cofactor.

Its function is as follows. Negatively regulates transcription of bacterial ribonucleotide reductase nrd genes and operons by binding to NrdR-boxes. The chain is Transcriptional repressor NrdR from Escherichia fergusonii (strain ATCC 35469 / DSM 13698 / CCUG 18766 / IAM 14443 / JCM 21226 / LMG 7866 / NBRC 102419 / NCTC 12128 / CDC 0568-73).